We begin with the raw amino-acid sequence, 993 residues long: Serine/threonine-protein phosphatase 6 regulatory ankyrin repeat subunit B (993 aa).

ANK repeat units lie at residues 7–36 (TDQP…DVNT), 40–69 (EKRT…RVNA), 73–102 (MWLT…DVNA), 106–135 (NWQT…SVNV), 139–168 (GGRT…NINA), 172–201 (KDRR…EVTC), 205–234 (KGYT…EIDE), 238–267 (YGNT…NVNQ), 271–301 (NGFT…DVNI), 305–334 (DGKS…EIDC), 338–367 (DGNT…DTAK), 371–400 (HSMF…EIDT), 404–433 (FGRT…DFHK), 437–466 (CGRT…NVNE), 470–498 (WGRT…DNSE), 531–561 (EGYN…GFEE), 566–595 (ATKS…DLDI), 599–628 (KGRT…SIFV), 633–662 (TKRT…NPEA), 669–698 (KGQT…NVDT), 702–731 (LGCT…SILC), 735–764 (RGRT…SEED), 771–800 (QGYT…FRKF), 803–832 (NPFT…SSIV), 838–867 (KGRT…PVNA), 871–901 (SGKT…DLTV), 905–934 (DLNT…DESL), and 941–970 (ALQT…CVLA).

In terms of assembly, protein phosphatase 6 (PP6) holoenzyme is proposed to be a heterotrimeric complex formed by the catalytic subunit, a SAPS domain-containing subunit (PP6R) and an ankyrin repeat-domain containing regulatory subunit (ARS). Interacts with PPP6R1.

In terms of biological role, putative regulatory subunit of protein phosphatase 6 (PP6) that may be involved in the recognition of phosphoprotein substrates. This chain is Serine/threonine-protein phosphatase 6 regulatory ankyrin repeat subunit B (ANKRD44), found in Homo sapiens (Human).